The primary structure comprises 257 residues: 8-demethyl-8-aminoriboflavin-5'-phosphate synthase (257 aa).

Residues 11–13 (TLR), 19–21 (SQT), 91–94 (ITLN), 132–136 (CGNED), and Tyr240 each bind FMN.

It belongs to the SsuE family. Homotetramer.

The enzyme catalyses FMN + L-glutamate + 3 A + O2 + H2O = 8-amino-8-demethylriboflavin 5'-phosphate + 2-oxoglutarate + 3 AH2 + CO2 + H(+). It participates in antibiotic biosynthesis. Functionally, involved in the biosynthesis of the riboflavin analog antibiotic roseoflavin (3,8-dimethylamino-riboflavin). Catalyzes the site-specific substitution of the C-8 methyl group of riboflavin-5'-phosphate (FMN) by an amino group to yield 8-amino-8-demethylriboflavin 5'-phosphate, via a combined oxidation, decarboxylation and transamination reaction. The catalysis is initiated by an oxidation step in which the C-8 methyl group on the dimethylbenzene ring of FMN is converted to a formyl group to yield the 8-demethyl-8-formylriboflavin-5'-phosphate (OHC-RP) intermediate. In the presence of thiamine, the formyl group is oxidized into a carboxyl group to yield the 8-demethyl-8-carboxyriboflavin-5'-phosphate (HO2C-RP) intermediate. Finally, in the presence of L-glutamate as an amino donor, decarboxylation and aminotransfer occur, resulting in production of 8-demethyl-8-aminoriboflavin-5'-phosphate. Addition of NAD (but not NADP) to the reaction increases the yield 1.7-fold. The reaction also proceeds without the addition of any electron acceptor, and it is possible that molecular oxygen serves this role. This chain is 8-demethyl-8-aminoriboflavin-5'-phosphate synthase, found in Streptomyces davaonensis (strain DSM 101723 / JCM 4913 / KCC S-0913 / 768).